A 197-amino-acid polypeptide reads, in one-letter code: dITP/XTP pyrophosphatase (197 aa).

A substrate-binding site is contributed by 9 to 14 (TNNLNK). Mg(2+) is bound by residues Glu42 and Asp71. Asp71 acts as the Proton acceptor in catalysis. Substrate-binding positions include Ser72, 153-156 (FGYD), Lys176, and 181-182 (HR).

Belongs to the HAM1 NTPase family. As to quaternary structure, homodimer. The cofactor is Mg(2+).

It catalyses the reaction XTP + H2O = XMP + diphosphate + H(+). It carries out the reaction dITP + H2O = dIMP + diphosphate + H(+). The catalysed reaction is ITP + H2O = IMP + diphosphate + H(+). Its function is as follows. Pyrophosphatase that catalyzes the hydrolysis of nucleoside triphosphates to their monophosphate derivatives, with a high preference for the non-canonical purine nucleotides XTP (xanthosine triphosphate), dITP (deoxyinosine triphosphate) and ITP. Seems to function as a house-cleaning enzyme that removes non-canonical purine nucleotides from the nucleotide pool, thus preventing their incorporation into DNA/RNA and avoiding chromosomal lesions. This is dITP/XTP pyrophosphatase from Leptospira interrogans serogroup Icterohaemorrhagiae serovar copenhageni (strain Fiocruz L1-130).